The primary structure comprises 199 residues: Holliday junction branch migration complex subunit RuvA (199 aa).

The segment at 1 to 64 (MIGRLRGILL…DDAHLLYAFA (64 aa)) is domain I. The interval 65–143 (SEKERGLFRS…DMPESGVAGM (79 aa)) is domain II. The interval 144-150 (RPDRVDG) is flexible linker. Residues 151–199 (SAPGTVAEAVSALVALGYKPNEASRAVRRLDTEALTTEEIIRQALQRML) form a domain III region.

This sequence belongs to the RuvA family. In terms of assembly, homotetramer. Forms an RuvA(8)-RuvB(12)-Holliday junction (HJ) complex. HJ DNA is sandwiched between 2 RuvA tetramers; dsDNA enters through RuvA and exits via RuvB. An RuvB hexamer assembles on each DNA strand where it exits the tetramer. Each RuvB hexamer is contacted by two RuvA subunits (via domain III) on 2 adjacent RuvB subunits; this complex drives branch migration. In the full resolvosome a probable DNA-RuvA(4)-RuvB(12)-RuvC(2) complex forms which resolves the HJ.

The protein resides in the cytoplasm. The RuvA-RuvB-RuvC complex processes Holliday junction (HJ) DNA during genetic recombination and DNA repair, while the RuvA-RuvB complex plays an important role in the rescue of blocked DNA replication forks via replication fork reversal (RFR). RuvA specifically binds to HJ cruciform DNA, conferring on it an open structure. The RuvB hexamer acts as an ATP-dependent pump, pulling dsDNA into and through the RuvAB complex. HJ branch migration allows RuvC to scan DNA until it finds its consensus sequence, where it cleaves and resolves the cruciform DNA. This is Holliday junction branch migration complex subunit RuvA from Nitrosococcus oceani (strain ATCC 19707 / BCRC 17464 / JCM 30415 / NCIMB 11848 / C-107).